Here is a 198-residue protein sequence, read N- to C-terminus: Peptidyl-tRNA hydrolase (198 aa).

Position 15 (Y15) interacts with tRNA. H20 acts as the Proton acceptor in catalysis. The tRNA site is built by F66, N68, and N114.

This sequence belongs to the PTH family. As to quaternary structure, monomer.

It localises to the cytoplasm. The catalysed reaction is an N-acyl-L-alpha-aminoacyl-tRNA + H2O = an N-acyl-L-amino acid + a tRNA + H(+). Hydrolyzes ribosome-free peptidyl-tRNAs (with 1 or more amino acids incorporated), which drop off the ribosome during protein synthesis, or as a result of ribosome stalling. Its function is as follows. Catalyzes the release of premature peptidyl moieties from peptidyl-tRNA molecules trapped in stalled 50S ribosomal subunits, and thus maintains levels of free tRNAs and 50S ribosomes. The protein is Peptidyl-tRNA hydrolase of Cupriavidus necator (strain ATCC 17699 / DSM 428 / KCTC 22496 / NCIMB 10442 / H16 / Stanier 337) (Ralstonia eutropha).